The primary structure comprises 234 residues: Sugar fermentation stimulation protein homolog (234 aa).

This sequence belongs to the SfsA family.

The protein is Sugar fermentation stimulation protein homolog of Bartonella quintana (strain Toulouse) (Rochalimaea quintana).